Reading from the N-terminus, the 176-residue chain is Translation initiation factor IF-3 (176 aa).

The protein belongs to the IF-3 family. In terms of assembly, monomer.

It localises to the cytoplasm. In terms of biological role, IF-3 binds to the 30S ribosomal subunit and shifts the equilibrium between 70S ribosomes and their 50S and 30S subunits in favor of the free subunits, thus enhancing the availability of 30S subunits on which protein synthesis initiation begins. This chain is Translation initiation factor IF-3, found in Streptococcus thermophilus (strain ATCC BAA-491 / LMD-9).